The chain runs to 1422 residues: DNA-directed RNA polymerase subunit beta (1422 aa).

A disordered region spans residues 1392-1422 (QAAREAAERDLGGGPLGAPRGAVASGEKSSA).

Belongs to the RNA polymerase beta chain family. The RNAP catalytic core consists of 2 alpha, 1 beta, 1 beta' and 1 omega subunit. When a sigma factor is associated with the core the holoenzyme is formed, which can initiate transcription.

It carries out the reaction RNA(n) + a ribonucleoside 5'-triphosphate = RNA(n+1) + diphosphate. Functionally, DNA-dependent RNA polymerase catalyzes the transcription of DNA into RNA using the four ribonucleoside triphosphates as substrates. This Anaeromyxobacter dehalogenans (strain 2CP-C) protein is DNA-directed RNA polymerase subunit beta.